The chain runs to 498 residues: Lycopene beta cyclase, chloroplastic/chromoplastic (498 aa).

Residues 1-79 (MDTLLRTPNN…ELPMYDPSKG (79 aa)) constitute a chloroplast and chromoplast transit peptide. 84–112 (LAVVGGGPAGLAVAQQVSEAGLSVCSIDP) is an NAD(+) binding site. The short motif at 293–297 (FLEET) is the FLEET motif element.

It belongs to the lycopene cyclase family. Monomer. It depends on FAD as a cofactor. Requires NADPH as cofactor.

It is found in the plastid. It localises to the chloroplast. The protein resides in the chromoplast. It catalyses the reaction a carotenoid psi-end group = a carotenoid beta-end derivative. The catalysed reaction is all-trans-lycopene = gamma-carotene. It carries out the reaction gamma-carotene = all-trans-beta-carotene. The enzyme catalyses all-trans-neurosporene = beta-zeacarotene. It catalyses the reaction beta-zeacarotene = 7,8-dihydro-beta-carotene. Its pathway is carotenoid biosynthesis; beta-carotene biosynthesis. It functions in the pathway carotenoid biosynthesis; beta-zeacarotene biosynthesis. Catalyzes the double cyclization reaction which converts lycopene to beta-carotene. Catalyzes the double cyclization reaction which converts neurosporene to 7,8-dihydro-beta-carotene. This chain is Lycopene beta cyclase, chloroplastic/chromoplastic, found in Capsicum annuum (Capsicum pepper).